The primary structure comprises 1086 residues: DNA polymerase (1086 aa).

Residues Ser638–Thr657 form a disordered region.

This sequence belongs to the DNA polymerase type-B family.

It catalyses the reaction DNA(n) + a 2'-deoxyribonucleoside 5'-triphosphate = DNA(n+1) + diphosphate. Replicates the viral genome. Host DNA polymerases cannot substitute for the viral enzyme in this process. The sequence is that of DNA polymerase from Noctuidae (owlet moths).